The sequence spans 285 residues: Ret finger protein-like 4A (285 aa).

An RING-type; degenerate zinc finger spans residues 11 to 53; sequence CYFCFRYLENPVYLNCGYICCFQCLDSLEKSPEGDGVLCPNCS. In terms of domain architecture, B30.2/SPRY spans 78-276; it reads EPQLNFILTM…ISICPVMNPS (199 aa).

As to quaternary structure, interacts with PSMB1, UBE2A and CCNB1.

Its subcellular location is the cytoplasm. The protein resides in the nucleus. This chain is Ret finger protein-like 4A (Rfpl4a), found in Rattus norvegicus (Rat).